A 182-amino-acid chain; its full sequence is Peptidoglycan-recognition protein SB2 (182 aa).

An N-terminal signal peptide occupies residues 1–17; that stretch reads MKLQLALVLCGLTLALG. Residues 40-165 form the N-acetylmuramoyl-L-alanine amidase domain; sequence PVRLIIIHHT…CQTKATACPG (126 aa). Histidine 47 serves as a coordination point for Zn(2+). A disulfide bridge connects residues cysteine 54 and cysteine 60. N-linked (GlcNAc...) asparagine glycosylation is present at asparagine 149. Histidine 155 and cysteine 163 together coordinate Zn(2+).

The protein belongs to the N-acetylmuramoyl-L-alanine amidase 2 family. Zn(2+) is required as a cofactor.

It is found in the secreted. The enzyme catalyses Hydrolyzes the link between N-acetylmuramoyl residues and L-amino acid residues in certain cell-wall glycopeptides.. N-acetylmuramyl-L-alanine amidase involved in innate immunity by degrading bacterial peptidoglycans (PGN). Probably plays a scavenger role by digesting biologically active PGN into biologically inactive fragments. Has no direct bacteriolytic activity. This Drosophila melanogaster (Fruit fly) protein is Peptidoglycan-recognition protein SB2 (PGRP-SB2).